A 150-amino-acid polypeptide reads, in one-letter code: Mediator of RNA polymerase II transcription subunit 22a (150 aa).

The stretch at 99–127 (SLNDHVEQRIAEFDQEAEKTNRLLARIAD) forms a coiled coil.

Belongs to the Mediator complex subunit 22 family. Component of the Mediator complex.

The protein localises to the nucleus. In terms of biological role, component of the Mediator complex, a coactivator involved in the regulated transcription of nearly all RNA polymerase II-dependent genes. Mediator functions as a bridge to convey information from gene-specific regulatory proteins to the basal RNA polymerase II transcription machinery. The Mediator complex, having a compact conformation in its free form, is recruited to promoters by direct interactions with regulatory proteins and serves for the assembly of a functional preinitiation complex with RNA polymerase II and the general transcription factors. The sequence is that of Mediator of RNA polymerase II transcription subunit 22a (MED22A) from Arabidopsis thaliana (Mouse-ear cress).